The following is a 1248-amino-acid chain: Kinesin-like protein KIN-14I (1248 aa).

One can recognise a MyTH4 domain in the interval 88-244; it reads FQKDPIPTSL…PAREEIEALL (157 aa). The region spanning 249 to 563 is the FERM domain; sequence LTTIVFFLDE…HINDVMLRRY (315 aa). A coiled-coil region spans residues 586 to 659; it reads NIEIYEKRVQ…LDKLKSLCDE (74 aa). The tract at residues 675–704 is disordered; sequence ETRLKSGQGQESSNRTGVSGNHFERDTLPT. Positions 679–693 are enriched in polar residues; sequence KSGQGQESSNRTGVS. A coiled-coil region spans residues 708–799; the sequence is VNNSIEMLAK…TRSLNVTEST (92 aa). A Kinesin motor domain is found at 872-1193; that stretch reads KIRVFCRLRP…LMYASRVRCI (322 aa). Residue 953-960 coordinates ATP; that stretch reads GQTGSGKT. Residues 1201–1223 form a calmodulin-binding region; sequence VAPKEIMRLKKLIAYWKEQAGKR. Positions 1220-1248 are disordered; that stretch reads AGKRSEDDDLEEIQEERTPKEKADNRLTS. Positions 1234 to 1248 are enriched in basic and acidic residues; sequence EERTPKEKADNRLTS.

It belongs to the TRAFAC class myosin-kinesin ATPase superfamily. Kinesin family. KIN-14 subfamily. Binds microtubules via its N-terminus containing the MyTH4 domain and binds F-actin via its FERM domain. Binding to calmodulin inhibits microtubule binding activity.

The protein resides in the cytoplasm. The protein localises to the cytoskeleton. Minus-end microtubule-dependent motor protein involved in the regulation of cell division. The sequence is that of Kinesin-like protein KIN-14I from Oryza sativa subsp. japonica (Rice).